We begin with the raw amino-acid sequence, 364 residues long: tRNA/tmRNA (uracil-C(5))-methyltransferase (364 aa).

S-adenosyl-L-methionine contacts are provided by glutamine 188, tyrosine 216, asparagine 221, glutamate 237, and aspartate 297. The active-site Nucleophile is the cysteine 322. The active-site Proton acceptor is glutamate 356.

The protein belongs to the class I-like SAM-binding methyltransferase superfamily. RNA M5U methyltransferase family. TrmA subfamily.

It carries out the reaction uridine(54) in tRNA + S-adenosyl-L-methionine = 5-methyluridine(54) in tRNA + S-adenosyl-L-homocysteine + H(+). It catalyses the reaction uridine(341) in tmRNA + S-adenosyl-L-methionine = 5-methyluridine(341) in tmRNA + S-adenosyl-L-homocysteine + H(+). Functionally, dual-specificity methyltransferase that catalyzes the formation of 5-methyluridine at position 54 (m5U54) in all tRNAs, and that of position 341 (m5U341) in tmRNA (transfer-mRNA). The sequence is that of tRNA/tmRNA (uracil-C(5))-methyltransferase from Colwellia psychrerythraea (strain 34H / ATCC BAA-681) (Vibrio psychroerythus).